A 557-amino-acid polypeptide reads, in one-letter code: NADP-dependent malic enzyme (557 aa).

The active-site Proton donor is the Tyr91. Arg144 contributes to the NADP(+) binding site. 2 residues coordinate substrate: Arg144 and Lys162. Lys162 acts as the Proton acceptor in catalysis. Glu234 and Asp235 together coordinate Mn(2+). Asn238 provides a ligand contact to NADP(+). Position 258 (Asp258) interacts with Mn(2+). Residues 291–294 (AGEA), Ser325, Asn397, and Asn443 contribute to the NADP(+) site. Residue Asn443 participates in substrate binding.

Belongs to the malic enzymes family. Homotetramer. It depends on Mg(2+) as a cofactor. Mn(2+) is required as a cofactor. The N-terminus is blocked.

The protein localises to the cytoplasm. The enzyme catalyses (S)-malate + NADP(+) = pyruvate + CO2 + NADPH. It catalyses the reaction oxaloacetate + H(+) = pyruvate + CO2. The protein is NADP-dependent malic enzyme (ME1) of Columba livia (Rock dove).